An 86-amino-acid chain; its full sequence is Large ribosomal subunit protein uL23 (86 aa).

Belongs to the universal ribosomal protein uL23 family. In terms of assembly, part of the 50S ribosomal subunit. Contacts protein L29.

Binds to 23S rRNA. One of the proteins that surrounds the polypeptide exit tunnel on the outside of the ribosome. The polypeptide is Large ribosomal subunit protein uL23 (Pyrococcus horikoshii (strain ATCC 700860 / DSM 12428 / JCM 9974 / NBRC 100139 / OT-3)).